The following is a 380-amino-acid chain: Chaperone protein DnaJ (380 aa).

In terms of domain architecture, J spans 5-70 (DFYEVLGVSK…NLRARYDQYG (66 aa)). A CR-type zinc finger spans residues 135-213 (GVSKEIKVPS…CHGEGRYQKT (79 aa)). 8 residues coordinate Zn(2+): cysteine 148, cysteine 151, cysteine 165, cysteine 168, cysteine 187, cysteine 190, cysteine 201, and cysteine 204. CXXCXGXG motif repeat units lie at residues 148–155 (CEVCNGSG), 165–172 (CPTCHGAG), 187–194 (CPHCHGRG), and 201–208 (CRKCHGEG).

This sequence belongs to the DnaJ family. In terms of assembly, homodimer. The cofactor is Zn(2+).

The protein resides in the cytoplasm. Participates actively in the response to hyperosmotic and heat shock by preventing the aggregation of stress-denatured proteins and by disaggregating proteins, also in an autonomous, DnaK-independent fashion. Unfolded proteins bind initially to DnaJ; upon interaction with the DnaJ-bound protein, DnaK hydrolyzes its bound ATP, resulting in the formation of a stable complex. GrpE releases ADP from DnaK; ATP binding to DnaK triggers the release of the substrate protein, thus completing the reaction cycle. Several rounds of ATP-dependent interactions between DnaJ, DnaK and GrpE are required for fully efficient folding. Also involved, together with DnaK and GrpE, in the DNA replication of plasmids through activation of initiation proteins. The polypeptide is Chaperone protein DnaJ (Aeromonas salmonicida (strain A449)).